Reading from the N-terminus, the 662-residue chain is Transketolase (662 aa).

His-28 is a substrate binding site. Residues His-68 and 115–117 (GPL) contribute to the thiamine diphosphate site. Asp-156 lines the Mg(2+) pocket. Gly-157 and Asn-186 together coordinate thiamine diphosphate. Asn-186 and Ile-188 together coordinate Mg(2+). Positions 261, 356, and 383 each coordinate substrate. His-261 serves as a coordination point for thiamine diphosphate. Glu-410 serves as the catalytic Proton donor. Phe-436 contributes to the thiamine diphosphate binding site. 3 residues coordinate substrate: His-460, Asp-468, and Arg-519.

This sequence belongs to the transketolase family. Homodimer. Requires Mg(2+) as cofactor. It depends on Ca(2+) as a cofactor. Mn(2+) is required as a cofactor. Co(2+) serves as cofactor. The cofactor is thiamine diphosphate.

It carries out the reaction D-sedoheptulose 7-phosphate + D-glyceraldehyde 3-phosphate = aldehydo-D-ribose 5-phosphate + D-xylulose 5-phosphate. The protein operates within carbohydrate biosynthesis; Calvin cycle. Its pathway is carbohydrate degradation; pentose phosphate pathway. Its function is as follows. Catalyzes the transfer of a two-carbon ketol group from a ketose donor to an aldose acceptor, via a covalent intermediate with the cofactor thiamine pyrophosphate. This chain is Transketolase (tkt), found in Staphylococcus epidermidis (strain ATCC 35984 / DSM 28319 / BCRC 17069 / CCUG 31568 / BM 3577 / RP62A).